The primary structure comprises 1020 residues: FERM domain-containing protein 4A (1020 aa).

An FERM domain is found at 5–307 (RRCQVHLLDD…SQHQFYLDRK (303 aa)). Positions 343–405 (KGKIISGSSG…RLCLREAELT (63 aa)) are necessary for interaction with CYTH1. A compositionally biased stretch (low complexity) spans 351 to 367 (SGSLLSSGSQESDSSQS). A disordered region spans residues 351–371 (SGSLLSSGSQESDSSQSAKKD). Residues 367 to 401 (SAKKDMLAALKSRQEALEETLRQRLEELKRLCLRE) adopt a coiled-coil conformation. S515 is modified (phosphoserine). Residues 538–665 (DEDSQVTSTI…MPSTPDLRVR (128 aa)) are disordered. Residues 542-551 (QVTSTISPLQ) are compositionally biased toward polar residues. Residues 556–572 (GLPPRPPSSHNRPPPPQ) are compositionally biased toward pro residues. Residues 565 to 920 (HNRPPPPQSL…QWYQRSTASH (356 aa)) form a necessary for tight junction and adherens junction localization; Requires for interaction with PARD3 region. 2 positions are modified to phosphoserine: S590 and S601. Residues 609 to 624 (VKKRSSHGHSSSHKRF) are compositionally biased toward basic residues. Residues 626 to 658 (STGSCTEAGVSSSLQNSPIRSLPHWNSQSSMPS) are compositionally biased toward polar residues. Phosphoserine occurs at positions 666 and 696. Disordered stretches follow at residues 698–741 (ESQG…HSSS) and 757–810 (AEDS…QSQP). The span at 773–796 (RAAGALGSASSGSMPNLAARSGAA) shows a compositional bias: low complexity. Phosphoserine is present on residues S785, S854, and S882. Disordered stretches follow at residues 862–949 (KESW…STFV) and 961–1020 (CKAT…STDE). Residues 893-910 (DGAHDKGSGRAAVSDELR) show a composition bias toward basic and acidic residues. Low complexity predominate over residues 927-947 (SHTSSTSSDSGSQYSTSSQST). Polar residues-rich tracts occupy residues 967 to 981 (ALPQ…SSEI), 994 to 1004 (TWQTGEATENS), and 1011 to 1020 (ESPTHQSTDE).

Interacts (via coiled-coil domain) with CYTH1 (via coiled-coil domain). Interacts with PARD3 (via coiled-coil domain). Found in a complex with PARD3, CYTH1 and FRMD4A. Interacts with CYTH2. Interacts with CYTH3.

It localises to the cytoplasm. Its subcellular location is the cytoskeleton. The protein localises to the cell junction. The protein resides in the adherens junction. It is found in the tight junction. Functionally, scaffolding protein that regulates epithelial cell polarity by connecting ARF6 activation with the PAR3 complex. Plays a redundant role with FRMD4B in epithelial polarization. May regulate MAPT secretion by activating ARF6-signaling. The protein is FERM domain-containing protein 4A (Frmd4a) of Mus musculus (Mouse).